Reading from the N-terminus, the 470-residue chain is Shutoff alkaline exonuclease (470 aa).

It belongs to the herpesviridae alkaline nuclease family. As to quaternary structure, forms a complex with the DNA polymerase, the DNA polymerase processivity factor, and the major DNA binding protein.

The protein localises to the host nucleus. Its subcellular location is the host cytoplasm. Its function is as follows. Plays a role in processing non linear or branched viral DNA intermediates in order to promote the production of mature packaged unit-length linear progeny viral DNA molecules. Exhibits endonuclease and exonuclease activities and accepts both double-stranded and single-stranded DNA as substrate. Exonuclease digestion of DNA is in the 5'-&gt; 3' direction and the products are 5'-monophosphate nucleosides. Additionally, forms a recombinase with the major DNA-binding protein, which displays strand exchange activity. Also acts as a cytoplasmic RNA endonuclease that induces degradation of the majority of the cellular messenger RNAs during early lytic infection. The resulting inhibition of cellular protein synthesis serves to ensure maximal viral gene expression and evasion from host immune response. Internally cleaves host mRNAs which are then degraded by the cellular exonuclease XRN1. Bypasses therefore the regulatory steps of deadenylation and decapping normally required for XRN1 activation. This Epstein-Barr virus (strain GD1) (HHV-4) protein is Shutoff alkaline exonuclease.